The primary structure comprises 291 residues: ATP phosphoribosyltransferase (291 aa).

Belongs to the ATP phosphoribosyltransferase family. Long subfamily. It depends on Mg(2+) as a cofactor.

The protein localises to the cytoplasm. The enzyme catalyses 1-(5-phospho-beta-D-ribosyl)-ATP + diphosphate = 5-phospho-alpha-D-ribose 1-diphosphate + ATP. Its pathway is amino-acid biosynthesis; L-histidine biosynthesis; L-histidine from 5-phospho-alpha-D-ribose 1-diphosphate: step 1/9. Feedback inhibited by histidine. Catalyzes the condensation of ATP and 5-phosphoribose 1-diphosphate to form N'-(5'-phosphoribosyl)-ATP (PR-ATP). Has a crucial role in the pathway because the rate of histidine biosynthesis seems to be controlled primarily by regulation of HisG enzymatic activity. This chain is ATP phosphoribosyltransferase, found in Geotalea uraniireducens (strain Rf4) (Geobacter uraniireducens).